Reading from the N-terminus, the 179-residue chain is Isopentenyl-diphosphate Delta-isomerase (179 aa).

Residues H25 and H31 each contribute to the Mn(2+) site. A Nudix hydrolase domain is found at E29–L161. C66 is a catalytic residue. C66 is a binding site for Mg(2+). H68 contacts Mn(2+). A Mg(2+)-binding site is contributed by E86. Residues E111 and E113 each contribute to the Mn(2+) site. Residue E113 is part of the active site.

The protein belongs to the IPP isomerase type 1 family. Homodimer. The cofactor is Mg(2+). Mn(2+) is required as a cofactor.

The protein localises to the cytoplasm. It carries out the reaction isopentenyl diphosphate = dimethylallyl diphosphate. The protein operates within isoprenoid biosynthesis; dimethylallyl diphosphate biosynthesis; dimethylallyl diphosphate from isopentenyl diphosphate: step 1/1. In terms of biological role, catalyzes the 1,3-allylic rearrangement of the homoallylic substrate isopentenyl (IPP) to its highly electrophilic allylic isomer, dimethylallyl diphosphate (DMAPP). The chain is Isopentenyl-diphosphate Delta-isomerase from Pectobacterium atrosepticum (strain SCRI 1043 / ATCC BAA-672) (Erwinia carotovora subsp. atroseptica).